A 397-amino-acid polypeptide reads, in one-letter code: Mycinamicin IV hydroxylase/epoxidase (397 aa).

Residues 63–86 (RGPSMTRDEPRTRPEMVKGGLLSM) are disordered. Over residues 68-78 (TRDEPRTRPEM) the composition is skewed to basic and acidic residues. Glycine 81 provides a ligand contact to substrate. Heme is bound by residues histidine 91, arginine 95, arginine 288, histidine 344, and cysteine 346.

This sequence belongs to the cytochrome P450 family. Heme is required as a cofactor.

The protein operates within antibiotic biosynthesis; mycinamicin biosynthesis. Its function is as follows. Involved in the biosynthesis of mycinamicin, a 16-membered macrolide antibiotic. Catalyzes consecutive hydroxylation (at C14) and epoxidation (at C12-C13) reactions with mycinamicin IV as initial substrate, leading to mycinamicin II. These reactions require prior dimethylation of 6-deoxyallose to mycinose for effective conversion by the dual function MycG enzyme. The chain is Mycinamicin IV hydroxylase/epoxidase from Micromonospora griseorubida.